Reading from the N-terminus, the 157-residue chain is Large ribosomal subunit protein uL15 (157 aa).

Residues 1–41 (MKLHELSDNPGATKKRKRVGRGPGSGTGKMGGRGIKGQKSR) are disordered. Residues 21-35 (RGPGSGTGKMGGRGI) show a composition bias toward gly residues.

The protein belongs to the universal ribosomal protein uL15 family. As to quaternary structure, part of the 50S ribosomal subunit.

Functionally, binds to the 23S rRNA. The chain is Large ribosomal subunit protein uL15 from Jannaschia sp. (strain CCS1).